The following is a 385-amino-acid chain: Glucans biosynthesis protein C (385 aa).

The next 10 helical transmembrane spans lie at 17-37, 60-80, 91-111, 137-157, 173-193, 212-232, 239-259, 274-294, 311-331, and 338-358; these read AWLM…SHTW, MQVF…RYPL, VGIP…IMLQ, ISHL…VWIF, KFSM…YAVI, FIVM…LAFI, LFTT…VAYL, TESV…FSFG, ASLF…AYIT, and WLGF…LYEI.

This sequence belongs to the acyltransferase 3 family. OpgC subfamily.

The protein localises to the cell membrane. It functions in the pathway glycan metabolism; osmoregulated periplasmic glucan (OPG) biosynthesis. Necessary for the succinyl substitution of periplasmic glucans. Could catalyze the transfer of succinyl residues from the cytoplasmic side of the membrane to the nascent glucan backbones on the periplasmic side of the membrane. This is Glucans biosynthesis protein C from Shigella dysenteriae serotype 1 (strain Sd197).